The following is a 310-amino-acid chain: Oxygen-dependent coproporphyrinogen-III oxidase (310 aa).

Position 92 (S92) interacts with substrate. Positions 96 and 106 each coordinate a divalent metal cation. Catalysis depends on H106, which acts as the Proton donor. 108–110 (NVR) lines the substrate pocket. The a divalent metal cation site is built by H145 and H175. Positions 240 to 275 (YVEFNLIWDRGTLFGLQSGGRTESILMSMPPLARWE) are important for dimerization. Residue 258–260 (GGR) participates in substrate binding.

The protein belongs to the aerobic coproporphyrinogen-III oxidase family. Homodimer. A divalent metal cation is required as a cofactor.

It localises to the cytoplasm. It catalyses the reaction coproporphyrinogen III + O2 + 2 H(+) = protoporphyrinogen IX + 2 CO2 + 2 H2O. Its pathway is porphyrin-containing compound metabolism; protoporphyrin-IX biosynthesis; protoporphyrinogen-IX from coproporphyrinogen-III (O2 route): step 1/1. Involved in the heme biosynthesis. Catalyzes the aerobic oxidative decarboxylation of propionate groups of rings A and B of coproporphyrinogen-III to yield the vinyl groups in protoporphyrinogen-IX. The polypeptide is Oxygen-dependent coproporphyrinogen-III oxidase (Pectobacterium carotovorum subsp. carotovorum (strain PC1)).